The primary structure comprises 324 residues: dITP/XTP pyrophosphatase (324 aa).

The segment at 1–127 (MTKTIFESKT…KNDNNFGDTI (127 aa)) is unknown. The NTP pyrophosphatase stretch occupies residues 128–324 (LIATHNEGKT…EVFPKWQLEN (197 aa)). Position 131–136 (131–136 (THNEGK)) interacts with substrate. E164 and D193 together coordinate Mg(2+). Catalysis depends on D193, which acts as the Proton acceptor. Residues S194, 277-280 (FGYD), K300, and 305-306 (HR) contribute to the substrate site.

The protein belongs to the HAM1 NTPase family. As to quaternary structure, homodimer. Mg(2+) is required as a cofactor.

The catalysed reaction is XTP + H2O = XMP + diphosphate + H(+). It carries out the reaction dITP + H2O = dIMP + diphosphate + H(+). The enzyme catalyses ITP + H2O = IMP + diphosphate + H(+). Its function is as follows. Pyrophosphatase that catalyzes the hydrolysis of nucleoside triphosphates to their monophosphate derivatives, with a high preference for the non-canonical purine nucleotides XTP (xanthosine triphosphate), dITP (deoxyinosine triphosphate) and ITP. Seems to function as a house-cleaning enzyme that removes non-canonical purine nucleotides from the nucleotide pool, thus preventing their incorporation into DNA/RNA and avoiding chromosomal lesions. The chain is dITP/XTP pyrophosphatase from Streptococcus agalactiae serotype III (strain NEM316).